The sequence spans 303 residues: Glutathione transport system permease protein GsiD (303 aa).

The next 6 membrane-spanning stretches (helical) occupy residues 40-60 (AMTA…ARWI), 105-125 (LAAG…LGLL), 144-164 (LFAF…GSGI), 165-185 (ANVI…LVRG), 222-242 (IVVF…SLSF), and 266-286 (VIAP…VLAF). Residues 101–290 (AQISLAAGVF…LTVLAFNLLG (190 aa)) form the ABC transmembrane type-1 domain.

Belongs to the binding-protein-dependent transport system permease family. In terms of assembly, the complex is composed of two ATP-binding proteins (GsiA), two transmembrane proteins (GsiC and GsiD) and a solute-binding protein (GsiB).

It is found in the cell inner membrane. Its function is as follows. Part of the ABC transporter complex GsiABCD involved in glutathione import. Probably responsible for the translocation of the substrate across the membrane. The sequence is that of Glutathione transport system permease protein GsiD from Escherichia coli O6:K15:H31 (strain 536 / UPEC).